Here is a 390-residue protein sequence, read N- to C-terminus: Glucose-fructose oxidoreductase domain-containing protein 1 (390 aa).

Positions 1–21 (MLPGVGVFGTSLTARVIIPLL) are cleaved as a signal peptide.

The protein belongs to the Gfo/Idh/MocA family. In terms of assembly, homodimer. Interacts with NKIRAS2.

The protein localises to the secreted. Functionally, probably catalytically inactive enzyme. Does not bind NAD or NADP. This is Glucose-fructose oxidoreductase domain-containing protein 1 (Gfod1) from Mus musculus (Mouse).